Here is a 630-residue protein sequence, read N- to C-terminus: Biosynthetic arginine decarboxylase (630 aa).

The residue at position 99 (Lys-99) is an N6-(pyridoxal phosphate)lysine. 281-291 (VDIGGGLGVDY) is a substrate binding site.

The protein belongs to the Orn/Lys/Arg decarboxylase class-II family. SpeA subfamily. It depends on Mg(2+) as a cofactor. Requires pyridoxal 5'-phosphate as cofactor.

The enzyme catalyses L-arginine + H(+) = agmatine + CO2. Its pathway is amine and polyamine biosynthesis; agmatine biosynthesis; agmatine from L-arginine: step 1/1. Its function is as follows. Catalyzes the biosynthesis of agmatine from arginine. This Phocaeicola vulgatus (strain ATCC 8482 / DSM 1447 / JCM 5826 / CCUG 4940 / NBRC 14291 / NCTC 11154) (Bacteroides vulgatus) protein is Biosynthetic arginine decarboxylase.